The chain runs to 404 residues: Tryptophan synthase beta chain (404 aa).

An N6-(pyridoxal phosphate)lysine modification is found at K95.

It belongs to the TrpB family. As to quaternary structure, tetramer of two alpha and two beta chains. The cofactor is pyridoxal 5'-phosphate.

It carries out the reaction (1S,2R)-1-C-(indol-3-yl)glycerol 3-phosphate + L-serine = D-glyceraldehyde 3-phosphate + L-tryptophan + H2O. Its pathway is amino-acid biosynthesis; L-tryptophan biosynthesis; L-tryptophan from chorismate: step 5/5. In terms of biological role, the beta subunit is responsible for the synthesis of L-tryptophan from indole and L-serine. This is Tryptophan synthase beta chain (trpB) from Thermus thermophilus (strain ATCC BAA-163 / DSM 7039 / HB27).